We begin with the raw amino-acid sequence, 361 residues long: tRNA N6-adenosine threonylcarbamoyltransferase (361 aa).

Residues H110 and H114 each coordinate Fe cation. Residues 132-136 (LVSGG), D165, G178, D182, and N284 contribute to the substrate site. Position 312 (D312) interacts with Fe cation.

This sequence belongs to the KAE1 / TsaD family. The cofactor is Fe(2+).

It localises to the cytoplasm. The catalysed reaction is L-threonylcarbamoyladenylate + adenosine(37) in tRNA = N(6)-L-threonylcarbamoyladenosine(37) in tRNA + AMP + H(+). Its function is as follows. Required for the formation of a threonylcarbamoyl group on adenosine at position 37 (t(6)A37) in tRNAs that read codons beginning with adenine. Is involved in the transfer of the threonylcarbamoyl moiety of threonylcarbamoyl-AMP (TC-AMP) to the N6 group of A37, together with TsaE and TsaB. TsaD likely plays a direct catalytic role in this reaction. This Desulfovibrio desulfuricans (strain ATCC 27774 / DSM 6949 / MB) protein is tRNA N6-adenosine threonylcarbamoyltransferase.